The following is a 127-amino-acid chain: Protein pkiA (127 aa).

One can recognise an HIT domain in the interval 16 to 127; that stretch reads IFAKIISGAI…GGRQMNWPPG (112 aa).

This chain is Protein pkiA (pkiA), found in Dictyostelium discoideum (Social amoeba).